The primary structure comprises 184 residues: MKGSSLSLEIAEPYAQALMSVSQSNNLTERFGEDIRSLLDLLNNSPELREFLSNPVIREENKKEILQRIMGDQTHPYLRNFLMLLVDKRRIAFLEQVCEQYLALLRQLTNTVLAEVVSATELNDEQRQSVIDKVKTISGAQAVELKASINPDLIGGVIIKIGSQILDASIRGQLRRISLSLGGV.

This sequence belongs to the ATPase delta chain family. In terms of assembly, F-type ATPases have 2 components, F(1) - the catalytic core - and F(0) - the membrane proton channel. F(1) has five subunits: alpha(3), beta(3), gamma(1), delta(1), epsilon(1). CF(0) has four main subunits: a(1), b(1), b'(1) and c(10-14). The alpha and beta chains form an alternating ring which encloses part of the gamma chain. F(1) is attached to F(0) by a central stalk formed by the gamma and epsilon chains, while a peripheral stalk is formed by the delta, b and b' chains.

It is found in the cellular thylakoid membrane. Functionally, f(1)F(0) ATP synthase produces ATP from ADP in the presence of a proton or sodium gradient. F-type ATPases consist of two structural domains, F(1) containing the extramembraneous catalytic core and F(0) containing the membrane proton channel, linked together by a central stalk and a peripheral stalk. During catalysis, ATP synthesis in the catalytic domain of F(1) is coupled via a rotary mechanism of the central stalk subunits to proton translocation. Its function is as follows. This protein is part of the stalk that links CF(0) to CF(1). It either transmits conformational changes from CF(0) to CF(1) or is implicated in proton conduction. In Gloeothece citriformis (strain PCC 7424) (Cyanothece sp. (strain PCC 7424)), this protein is ATP synthase subunit delta.